Consider the following 666-residue polypeptide: DNA mismatch repair protein MutL (666 aa).

Belongs to the DNA mismatch repair MutL/HexB family.

This protein is involved in the repair of mismatches in DNA. It is required for dam-dependent methyl-directed DNA mismatch repair. May act as a 'molecular matchmaker', a protein that promotes the formation of a stable complex between two or more DNA-binding proteins in an ATP-dependent manner without itself being part of a final effector complex. The sequence is that of DNA mismatch repair protein MutL from Clostridium botulinum (strain Loch Maree / Type A3).